A 94-amino-acid polypeptide reads, in one-letter code: Exodeoxyribonuclease 7 small subunit (94 aa).

It belongs to the XseB family. As to quaternary structure, heterooligomer composed of large and small subunits.

Its subcellular location is the cytoplasm. The enzyme catalyses Exonucleolytic cleavage in either 5'- to 3'- or 3'- to 5'-direction to yield nucleoside 5'-phosphates.. Its function is as follows. Bidirectionally degrades single-stranded DNA into large acid-insoluble oligonucleotides, which are then degraded further into small acid-soluble oligonucleotides. The sequence is that of Exodeoxyribonuclease 7 small subunit from Trichormus variabilis (strain ATCC 29413 / PCC 7937) (Anabaena variabilis).